The sequence spans 568 residues: Urease subunit alpha (568 aa).

Residues 131–568 (GGMDAHIHFI…LPLAQRYFLY (438 aa)) form the Urease domain. 3 residues coordinate Ni(2+): His136, His138, and Lys219. Residue Lys219 is modified to N6-carboxylysine. Position 221 (His221) interacts with substrate. Ni(2+) is bound by residues His248 and His274. His322 acts as the Proton donor in catalysis. A Ni(2+)-binding site is contributed by Asp362.

This sequence belongs to the metallo-dependent hydrolases superfamily. Urease alpha subunit family. Heterotrimer of UreA (gamma), UreB (beta) and UreC (alpha) subunits. Three heterotrimers associate to form the active enzyme. Ni cation is required as a cofactor. Post-translationally, carboxylation allows a single lysine to coordinate two nickel ions.

Its subcellular location is the cytoplasm. The enzyme catalyses urea + 2 H2O + H(+) = hydrogencarbonate + 2 NH4(+). It functions in the pathway nitrogen metabolism; urea degradation; CO(2) and NH(3) from urea (urease route): step 1/1. This is Urease subunit alpha from Cereibacter sphaeroides (strain ATCC 17025 / ATH 2.4.3) (Rhodobacter sphaeroides).